An 811-amino-acid chain; its full sequence is MGNMLKGEGPGPLPPLLQQYVELRDRYPDYLLLFQVGDFYECFGEDAERLARALGLVLTHKTSKDFTTPMAGIPIRAFDAYAERLLKMGFRLAVADQVEPAEEAEGLVRREVTQLLTPGTLTQEALLPREANYLAAIATGDGWGLAFLDVSTGEFKGTLLKSKSALYDELFRHRPAEVLLAPELRENEAFVAEFRKRFPVMLSEAPFEPQGEGPLALRRAQGALLAYARATQGGALSVRPFRLYDPGAFVRLPEASLKALEVFEPLRGQDTLFGVLDETRTAPGRRLLQAWLRHPLLERGPLEARLDRVERFVREGALREGVRRLLFRLADLERLATRLELSRASPRDLAALRRSLEILPELKGLLGEEVGLPDLSGLLEELRAALVEDPPLKVSEGGLIREGYDPDLDALRRAHAEGVAYFLDLEAREKERTGIPTLKVGYNAVFGYYLEVTRPYYEKVPQEYRPVQTLKDRQRYTLPEMKERERELYRLEALIKRREEEVFLALRERARKEAEALREAARILAELDVYAALAEVAVRHGYTRPRFGERLRIRAGRHPVVERRTAFVPNDLEMAHELVLVTGPNMAGKSTFLRQTALIALLAQIGSFVPAEEAELPLFDGIYTRIGASDDLAGGKSTFMVEMEEVALVLKEATERSLVLLDEVGRGTSSLDGVAIATALAEALHERRCYTLFATHYFELTALALPRLKNLHVAAKEEEGGLVFYHQVLPGPASKSYGVEVAEMAGLPKEVVERARALLSAMAARREGALEEVLERLLALDPDRLTPLEALRFLHELKALALGLPLGSMKG.

583-590 lines the ATP pocket; it reads GPNMAGKS.

The protein belongs to the DNA mismatch repair MutS family.

This protein is involved in the repair of mismatches in DNA. It is possible that it carries out the mismatch recognition step. This protein has a weak ATPase activity. This chain is DNA mismatch repair protein MutS, found in Thermus thermophilus (strain ATCC BAA-163 / DSM 7039 / HB27).